Consider the following 423-residue polypeptide: Sulfate adenylyltransferase (423 aa).

Sulfate contacts are provided by Q207 and R209. Residues 207 to 210 (QLRN) and 301 to 304 (GRDH) contribute to the ATP site. Catalysis depends on residues R209 and N210. A305 serves as a coordination point for sulfate.

The protein belongs to the sulfate adenylyltransferase family.

Its subcellular location is the mitosome. It carries out the reaction sulfate + ATP + H(+) = adenosine 5'-phosphosulfate + diphosphate. It participates in sulfur metabolism; hydrogen sulfide biosynthesis; sulfite from sulfate: step 1/3. In terms of biological role, catalyzes the first intracellular reaction of sulfate assimilation, forming adenosine-5'-phosphosulfate (APS) from inorganic sulfate and ATP. The polypeptide is Sulfate adenylyltransferase (Entamoeba histolytica (strain ATCC 30459 / HM-1:IMSS / ABRM)).